We begin with the raw amino-acid sequence, 244 residues long: Phosphatidylinositol phosphate synthase (244 aa).

The next 3 helical transmembrane spans lie at 24 to 42 (YARA…FLIR), 49 to 66 (TVTL…LVFY), and 72 to 91 (FWGT…DGNM). 48-51 (DTVT) contacts a CDP-1,2-diacyl-sn-glycerol. The Mg(2+) site is built by aspartate 85 and aspartate 88. A CDP-1,2-diacyl-sn-glycerol contacts are provided by glycine 89, arginine 93, and serine 99. Mg(2+) is bound by residues aspartate 106 and aspartate 110. Aspartate 110 (proton acceptor) is an active-site residue. The next 3 helical transmembrane spans lie at 117-137 (IFGG…LCAV), 174-190 (LVIS…HKFG), and 196-214 (VLLP…VTLI).

It belongs to the CDP-alcohol phosphatidyltransferase class-I family. In terms of assembly, homodimer. It depends on Mg(2+) as a cofactor.

It is found in the cell membrane. It carries out the reaction a CDP-1,2-diacyl-sn-glycerol + 1D-myo-inositol 3-phosphate = a 1,2-diacyl-sn-glycero-3-phospho-(1D-myo-inositol-3-phosphate) + CMP + H(+). The catalysed reaction is 1,2-di-(9Z-octadecenoyl)-sn-glycero-3-cytidine-5'-diphosphate + 1D-myo-inositol 3-phosphate = 1,2-di-(9Z-octadecenoyl)-sn-glycero-3-phospho-(1D-myo-inositol-3-phosphate) + CMP + H(+). Its pathway is phospholipid metabolism; phosphatidylinositol phosphate biosynthesis. In terms of biological role, catalyzes the conjugation of the 1'-hydroxyl group of D-myo-inositol-3-phosphate (also named L-myo-inositol-1-phosphate) with a lipid tail of cytidine diphosphate diacylglycerol (CDP-DAG), forming phosphatidylinositol phosphate (PIP) and CMP. PIP is a precursor of phosphatidylinositol (PI) which is an essential lipid required for cell wall formation. The sequence is that of Phosphatidylinositol phosphate synthase from Streptomyces avermitilis (strain ATCC 31267 / DSM 46492 / JCM 5070 / NBRC 14893 / NCIMB 12804 / NRRL 8165 / MA-4680).